A 769-amino-acid polypeptide reads, in one-letter code: MSDDDKRHMELARLLVSLFPGRKLNGFLVGLLHSLSGRYRLPKELRGDRVPSSSKLARFIGTLDRERHIHSYFWDLLRRERPSRVGDIDRVARLWEEEGHWKGLESLRFPAGEVFPQVARGSSDNNGAPPLSFTLSHGDPKSDPEPSSPSRLVNTGLSEAERPESPLASDQCLVTSHAYFFWLEVGAWIEGSIEDEPVSLPEDLPSGARLRVVLFSSPGGLVLQPDADQGVLCIEGDGRVVVERPACVPPALQSRELADRRLFFPLRTPQAPGTYRLRCNIHHEGLLVQSRDVVLTVAEQPQRQSEALRSRVDYALSQTLSPTHLRQLGSATLSVLLNDDDWGTHGFRFVGGDDYRSSVHLDDAMLQEMISLARGAFRRASWGSKERYEALPSRPPYRYQGAQSEARLREDLVMMARIGRQLYDRVAEQLGQGADGADALRERMRLPGHIQLALKQGARHLVPISIFYDHRLDVALKDFTLCEAFIRASVASEPLEKSPCFQGDCPHREDRDVVCPSGFWGFRHTLALPFGMAAQGERGLMDLPGVLRIRDTPALLIAVSEDPDFVLRDNHLMRLQAMSGVAPIQVARSREKALELLRQQGSHLVYFYCHGGVDAETRAPFLQVGPLTDPYIFRDTLRVYDIRWRDPAPHPLVFINGCHTTELEPEQAIELVSGFVERAGAAGVIGTEVTIFEPLAVGFASRFMDAFLRRRLSLGASVREARLGILQHDFNPLGLVYLPFALSSLHLAGEASEGTSVAGGAGALVTPPA.

A disordered region spans residues 118 to 167 (VARGSSDNNGAPPLSFTLSHGDPKSDPEPSSPSRLVNTGLSEAERPESPL).

Probably a dedicated protease for substrate gasdermin bGSDM; cleaves the bGSDM precursor, releasing the pore-forming moiety, which integrates into the membrane and triggers cell death. Involved in defense against bacteriophages. Expression of gasdermin bGSDM and this neighboring protease is toxic in E.coli. This chain is Probable protease Ga0334635_1659, found in Vitiosangium sp. (strain GDMCC 1.1324).